The chain runs to 359 residues: tRNA-specific 2-thiouridylase MnmA (359 aa).

ATP-binding positions include 6 to 13 and Leu32; that span reads AMSGGVDS. Cys101 (nucleophile) is an active-site residue. A disulfide bridge connects residues Cys101 and Cys193. Position 125 (Gly125) interacts with ATP. Residues 143 to 145 are interaction with tRNA; the sequence is KDQ. The active-site Cysteine persulfide intermediate is Cys193.

It belongs to the MnmA/TRMU family.

It is found in the cytoplasm. The catalysed reaction is S-sulfanyl-L-cysteinyl-[protein] + uridine(34) in tRNA + AH2 + ATP = 2-thiouridine(34) in tRNA + L-cysteinyl-[protein] + A + AMP + diphosphate + H(+). In terms of biological role, catalyzes the 2-thiolation of uridine at the wobble position (U34) of tRNA, leading to the formation of s(2)U34. The polypeptide is tRNA-specific 2-thiouridylase MnmA (Mycobacterium sp. (strain KMS)).